Reading from the N-terminus, the 89-residue chain is Sugar transporter SemiSWEET (89 aa).

A run of 3 helical transmembrane segments spans residues 4–27 (ILLT…IKTI), 35–55 (ISVV…AYGI), and 60–82 (FAVL…ITLI). A PQ-loop domain is found at 7-59 (TGLFAAFFTTFAFAPQSIKTIRTRNTEGISVVMYIMFLTGVISWIAYGIMRSD).

In terms of assembly, homodimer.

It localises to the cell membrane. The homodimer mediates transmembrane sugar transport down a concentration gradient. Transport is probably effected by rocking-type movements, where a cargo-binding cavity opens first on one and then on the other side of the membrane. The polypeptide is Sugar transporter SemiSWEET (Escherichia coli (strain UMEA 3162-1)).